The chain runs to 219 residues: MGKTKNKSDWQIFLEDYRFYFETDFDWVTYLNNCLNSYPDFDIIKFIKKYGPECEKSFLSWQSKAKSDVYSELTNKIKKQQFSEQLIYQLVQLDALRTNYLIGSLFSDNKTQRKLLKRSWKNAKKEGYTKQEWLMILVGLPFEKGAYHKQLYDHSRQEILDLTEVIKKLYLKTETNNDKLEFAATTSKTTAQLTKTMPLNSSDLDKDLMEFSGEKWGDN.

This is an uncharacterized protein from Mycoplasma genitalium (strain ATCC 33530 / DSM 19775 / NCTC 10195 / G37) (Mycoplasmoides genitalium).